The following is a 428-amino-acid chain: MLAVHTSPLAQPGIGDAGGMNVYVLQSALHLARRGIEVEIFTRATASADPPIVWVAPGVLVRNVVAGPFEGLDKYDLPTQLCAFAAGVLRAEAAHEPGYYDIVHSHYWLSGQVGWLARDRWAVPLVHTAHTLAAVKNAALADGDAAEPPLRSVGEQQVVDEADRMIVNTDDEARQLISIHRADPAKIDVAHPGVDLDMFRPGDRRAARAALGLPLDGNVVAFVGRIQPLKAPDIVLRAAAKLPQVRIVVAGGPSGSGLASPDGLVRLADELGITARVTFLPPQSRTNLATVFQAADLVAVPSYSESFGLVAVEAQACGTPVVAAAVGGLPVAVRDGVTGTLVFGHNVGHWADAVDQLLRLSAGPQARAISRAAVVHAAQFSWDNTTDALLASYRRAIGDFTATRQHRVRDLVATRKPRRWISRRGMGA.

His5 contributes to the 1D-myo-inositol 3-phosphate binding site. UDP-N-acetyl-alpha-D-glucosamine-binding positions include 11-12 (QP) and Gly19. Residues 16–21 (DAGGMN), Lys74, Tyr107, Thr131, and Arg151 contribute to the 1D-myo-inositol 3-phosphate site. Arg225, Lys230, and Gln283 together coordinate UDP-N-acetyl-alpha-D-glucosamine. 3 residues coordinate Mg(2+): Phe292, Gln293, and Ala295. UDP-N-acetyl-alpha-D-glucosamine contacts are provided by Glu305 and Glu313. Thr319 is a binding site for Mg(2+).

Belongs to the glycosyltransferase group 1 family. MshA subfamily. In terms of assembly, homodimer.

It carries out the reaction 1D-myo-inositol 3-phosphate + UDP-N-acetyl-alpha-D-glucosamine = 1D-myo-inositol 2-acetamido-2-deoxy-alpha-D-glucopyranoside 3-phosphate + UDP + H(+). In terms of biological role, catalyzes the transfer of a N-acetyl-glucosamine moiety to 1D-myo-inositol 3-phosphate to produce 1D-myo-inositol 2-acetamido-2-deoxy-glucopyranoside 3-phosphate in the mycothiol biosynthesis pathway. The sequence is that of D-inositol 3-phosphate glycosyltransferase from Mycobacterium leprae (strain Br4923).